Consider the following 129-residue polypeptide: Glycine cleavage system H protein (129 aa).

Residues 24–106 (VFTVGISEHA…YGDGWLFKIK (83 aa)) enclose the Lipoyl-binding domain. Lys65 is modified (N6-lipoyllysine).

It belongs to the GcvH family. In terms of assembly, the glycine cleavage system is composed of four proteins: P, T, L and H. The cofactor is (R)-lipoate.

In terms of biological role, the glycine cleavage system catalyzes the degradation of glycine. The H protein shuttles the methylamine group of glycine from the P protein to the T protein. The chain is Glycine cleavage system H protein from Alteromonas mediterranea (strain DSM 17117 / CIP 110805 / LMG 28347 / Deep ecotype).